The chain runs to 201 residues: Holliday junction branch migration complex subunit RuvA (201 aa).

Residues 1–63 (MYDYIKGTVT…EDNISLFGFQ (63 aa)) form a domain I region. The interval 64–142 (TTEERYLFKK…DVVASEIVYV (79 aa)) is domain II. Positions 143–153 (APENDMVAGLS) are flexible linker. A domain III region spans residues 153 to 201 (SPQLEEAVLALEALGYSTRELKKVIPKLSKEEDLTSDAYIKLALQLMTK).

Belongs to the RuvA family. In terms of assembly, homotetramer. Forms an RuvA(8)-RuvB(12)-Holliday junction (HJ) complex. HJ DNA is sandwiched between 2 RuvA tetramers; dsDNA enters through RuvA and exits via RuvB. An RuvB hexamer assembles on each DNA strand where it exits the tetramer. Each RuvB hexamer is contacted by two RuvA subunits (via domain III) on 2 adjacent RuvB subunits; this complex drives branch migration. In the full resolvosome a probable DNA-RuvA(4)-RuvB(12)-RuvC(2) complex forms which resolves the HJ.

The protein resides in the cytoplasm. In terms of biological role, the RuvA-RuvB-RuvC complex processes Holliday junction (HJ) DNA during genetic recombination and DNA repair, while the RuvA-RuvB complex plays an important role in the rescue of blocked DNA replication forks via replication fork reversal (RFR). RuvA specifically binds to HJ cruciform DNA, conferring on it an open structure. The RuvB hexamer acts as an ATP-dependent pump, pulling dsDNA into and through the RuvAB complex. HJ branch migration allows RuvC to scan DNA until it finds its consensus sequence, where it cleaves and resolves the cruciform DNA. The protein is Holliday junction branch migration complex subunit RuvA of Listeria monocytogenes serotype 4b (strain CLIP80459).